Consider the following 383-residue polypeptide: Acetylornithine deacetylase (383 aa).

H80 contacts Zn(2+). Residue D82 is part of the active site. Zn(2+) is bound at residue D112. E144 is a catalytic residue. Positions 145, 169, and 355 each coordinate Zn(2+).

Belongs to the peptidase M20A family. ArgE subfamily. Homodimer. Zn(2+) is required as a cofactor. Co(2+) serves as cofactor. Requires glutathione as cofactor.

Its subcellular location is the cytoplasm. It carries out the reaction N(2)-acetyl-L-ornithine + H2O = L-ornithine + acetate. It functions in the pathway amino-acid biosynthesis; L-arginine biosynthesis; L-ornithine from N(2)-acetyl-L-ornithine (linear): step 1/1. In terms of biological role, catalyzes the hydrolysis of the amide bond of N(2)-acetylated L-amino acids. Cleaves the acetyl group from N-acetyl-L-ornithine to form L-ornithine, an intermediate in L-arginine biosynthesis pathway, and a branchpoint in the synthesis of polyamines. The chain is Acetylornithine deacetylase from Escherichia coli O9:H4 (strain HS).